The chain runs to 1375 residues: DNA-directed RNA polymerase subunit beta' (1375 aa).

Positions 70, 72, 85, and 88 each coordinate Zn(2+). 3 residues coordinate Mg(2+): D461, D463, and D465. Positions 797, 871, 878, and 881 each coordinate Zn(2+).

The protein belongs to the RNA polymerase beta' chain family. The RNAP catalytic core consists of 2 alpha, 1 beta, 1 beta' and 1 omega subunit. When a sigma factor is associated with the core the holoenzyme is formed, which can initiate transcription. The cofactor is Mg(2+). Zn(2+) serves as cofactor.

The enzyme catalyses RNA(n) + a ribonucleoside 5'-triphosphate = RNA(n+1) + diphosphate. In terms of biological role, DNA-dependent RNA polymerase catalyzes the transcription of DNA into RNA using the four ribonucleoside triphosphates as substrates. This is DNA-directed RNA polymerase subunit beta' from Neorickettsia sennetsu (strain ATCC VR-367 / Miyayama) (Ehrlichia sennetsu).